The sequence spans 452 residues: Probable alpha-galactosidase B (452 aa).

The signal sequence occupies residues methionine 1–alanine 24. Cysteine 47 and cysteine 79 form a disulfide bridge. Residues asparagine 87 and asparagine 138 are each glycosylated (N-linked (GlcNAc...) asparagine). Cysteine 129 and cysteine 159 form a disulfide bridge. Catalysis depends on aspartate 157, which acts as the Nucleophile. An N-linked (GlcNAc...) asparagine glycan is attached at asparagine 184. Aspartate 231 to alanine 235 lines the substrate pocket. Aspartate 253 functions as the Proton donor in the catalytic mechanism. N-linked (GlcNAc...) asparagine glycans are attached at residues asparagine 292, asparagine 391, asparagine 409, and asparagine 410.

The protein belongs to the glycosyl hydrolase 27 family.

It is found in the secreted. It catalyses the reaction Hydrolysis of terminal, non-reducing alpha-D-galactose residues in alpha-D-galactosides, including galactose oligosaccharides, galactomannans and galactolipids.. Its function is as follows. Hydrolyzes a variety of simple alpha-D-galactoside as well as more complex molecules such as oligosaccharides and polysaccharides. The sequence is that of Probable alpha-galactosidase B from Talaromyces emersonii (Thermophilic fungus).